We begin with the raw amino-acid sequence, 238 residues long: Ribitol-5-phosphate cytidylyltransferase 2 (238 aa).

CTP is bound by residues 7–10 and 81–87; these read LAGG and GTDRNET.

Belongs to the IspD/TarI cytidylyltransferase family. TarI subfamily. Heterodimer together with TarJ.

The enzyme catalyses D-ribitol 5-phosphate + CTP + H(+) = CDP-L-ribitol + diphosphate. Its pathway is cell wall biogenesis; poly(ribitol phosphate) teichoic acid biosynthesis. Catalyzes the transfer of the cytidylyl group of CTP to D-ribitol 5-phosphate. The protein is Ribitol-5-phosphate cytidylyltransferase 2 of Staphylococcus aureus (strain NCTC 8325 / PS 47).